The chain runs to 300 residues: Protoheme IX farnesyltransferase (300 aa).

9 helical membrane-spanning segments follow: residues 24-44 (VTQL…PGMV), 48-68 (VLLG…AINC), 94-114 (LQIL…LYTF), 118-138 (LTMW…TLLL), 146-166 (IVIG…AVTG), 172-192 (AWIL…VLAL), 217-237 (LHIL…FISG), 239-259 (SGAV…AYAW), and 278-298 (IVYL…RPVI).

The protein belongs to the UbiA prenyltransferase family. Protoheme IX farnesyltransferase subfamily.

The protein localises to the cell inner membrane. It carries out the reaction heme b + (2E,6E)-farnesyl diphosphate + H2O = Fe(II)-heme o + diphosphate. It participates in porphyrin-containing compound metabolism; heme O biosynthesis; heme O from protoheme: step 1/1. Converts heme B (protoheme IX) to heme O by substitution of the vinyl group on carbon 2 of heme B porphyrin ring with a hydroxyethyl farnesyl side group. This chain is Protoheme IX farnesyltransferase, found in Burkholderia thailandensis (strain ATCC 700388 / DSM 13276 / CCUG 48851 / CIP 106301 / E264).